The sequence spans 632 residues: tRNA uridine 5-carboxymethylaminomethyl modification enzyme MnmG (632 aa).

FAD-binding positions include 15-20 (GAGHAG), Ile-127, and Ser-182. 276–290 (GPRYCPSIEDKIVRF) contributes to the NAD(+) binding site. Gln-373 lines the FAD pocket.

This sequence belongs to the MnmG family. In terms of assembly, homodimer. Heterotetramer of two MnmE and two MnmG subunits. Requires FAD as cofactor.

The protein resides in the cytoplasm. NAD-binding protein involved in the addition of a carboxymethylaminomethyl (cmnm) group at the wobble position (U34) of certain tRNAs, forming tRNA-cmnm(5)s(2)U34. The chain is tRNA uridine 5-carboxymethylaminomethyl modification enzyme MnmG from Streptococcus pyogenes serotype M28 (strain MGAS6180).